Here is a 709-residue protein sequence, read N- to C-terminus: Leucine-rich repeat-containing protein 4B (709 aa).

An N-terminal signal peptide occupies residues 1–38 (MAQAHIQGSPCPLLPPGRMSWPQGALLLLWLFSPPLRA). The LRRNT domain maps to 50–88 (GGGSPPATSCPAACSCSNQASRVICTRRELAEVPASIPV). 9 LRR repeats span residues 89-110 (NTRY…TFKH), 113-134 (HLEI…AFNG), 137-158 (SLNT…AFEY), 161-182 (KLRE…AFNR), 185-207 (SLRR…AFEG), 210-231 (NLRY…TALV), 232-253 (RLEE…SFQG), 256-277 (SLRK…AFDD), and 280-301 (SLEE…LFTP). The LRRCT domain occupies 313–365 (NPWHCNCDVLWLSWWLKETVPSNTTCCARCHAPAGLKGRYIGELDQSHFTCYA). One can recognise an Ig-like C2-type domain in the interval 366–454 (PVIVEPPTDL…GNTTASATLN (89 aa)). Asn376, Asn402, Asn424, Asn427, and Asn446 each carry an N-linked (GlcNAc...) asparagine glycan. Residues Cys387 and Cys438 are joined by a disulfide bond. Residues 496–552 (TQPGEEAQQPRGTEKEPPGPTTDGAWGGGRPDAAAPASASTTAPAPRSSRPTEKAFT) are disordered. The segment covering 528 to 544 (AAAPASASTTAPAPRSS) has biased composition (low complexity). Residues 575-595 (IIIGCFVAITFMAAVMLVAFY) traverse the membrane as a helical segment. Position 689 is a phosphoserine (Ser689).

In terms of assembly, interacts with PTPRF. Interacts with DLG4. In terms of processing, N-glycosylated. O-glycosylated; contains sialic acid. In terms of tissue distribution, mainly expressed in the brain. Widespread distribution in various brain regions (at protein level). Detected both embryonically and postnatally with stronger expression in postnatal stages.

It localises to the membrane. Its subcellular location is the presynaptic cell membrane. Its function is as follows. Synaptic adhesion protein. Regulates the formation of excitatory synapses. The trans-synaptic adhesion between LRRC4B and PTPRF regulates the formation of excitatory synapses in a bidirectional manner. This chain is Leucine-rich repeat-containing protein 4B (Lrrc4b), found in Rattus norvegicus (Rat).